An 837-amino-acid polypeptide reads, in one-letter code: Protein translocase subunit SecA (837 aa).

Residues Gln-85, 103–107, and Asp-493 each bind ATP; that span reads GEGKT. Zn(2+) is bound by residues Cys-821, Cys-823, Cys-832, and His-833.

Belongs to the SecA family. In terms of assembly, monomer and homodimer. Part of the essential Sec protein translocation apparatus which comprises SecA, SecYEG and auxiliary proteins SecDF. Other proteins may also be involved. Zn(2+) serves as cofactor.

It localises to the cell membrane. Its subcellular location is the cytoplasm. The enzyme catalyses ATP + H2O + cellular proteinSide 1 = ADP + phosphate + cellular proteinSide 2.. Its function is as follows. Part of the Sec protein translocase complex. Interacts with the SecYEG preprotein conducting channel. Has a central role in coupling the hydrolysis of ATP to the transfer of proteins into and across the cell membrane, serving as an ATP-driven molecular motor driving the stepwise translocation of polypeptide chains across the membrane. The protein is Protein translocase subunit SecA of Streptococcus pneumoniae serotype 2 (strain D39 / NCTC 7466).